The following is a 298-amino-acid chain: Protoheme IX farnesyltransferase (298 aa).

9 helical membrane passes run 29–49, 51–71, 97–117, 120–140, 148–168, 175–195, 221–241, 243–263, and 278–298; these read LIVF…PPLL, FGVA…LNCL, ETVT…HGFI, LTMW…TLIL, IVIG…AMTG, LVLF…LACY, ILWY…LGMS, GFYL…AIAL, and YSIL…LIVL.

This sequence belongs to the UbiA prenyltransferase family. Protoheme IX farnesyltransferase subfamily.

The protein localises to the cell inner membrane. The enzyme catalyses heme b + (2E,6E)-farnesyl diphosphate + H2O = Fe(II)-heme o + diphosphate. It participates in porphyrin-containing compound metabolism; heme O biosynthesis; heme O from protoheme: step 1/1. Converts heme B (protoheme IX) to heme O by substitution of the vinyl group on carbon 2 of heme B porphyrin ring with a hydroxyethyl farnesyl side group. In Dechloromonas aromatica (strain RCB), this protein is Protoheme IX farnesyltransferase.